The primary structure comprises 173 residues: Co-chaperone protein HscB (173 aa).

In terms of domain architecture, J spans 2-74; sequence DYFTLFGLPV…LKRAEYMLSL (73 aa).

The protein belongs to the HscB family. In terms of assembly, interacts with HscA and stimulates its ATPase activity. Interacts with IscU.

Co-chaperone involved in the maturation of iron-sulfur cluster-containing proteins. Seems to help targeting proteins to be folded toward HscA. This Serratia proteamaculans (strain 568) protein is Co-chaperone protein HscB.